A 385-amino-acid polypeptide reads, in one-letter code: Transcription factor TGAL3 (385 aa).

Positions 62-113 (LHALVGGGDGGDDAGEQRGADSSAVSKERRGDQKMQRRLAQNREAARKSRMR) are disordered. The segment covering 87 to 96 (SKERRGDQKM) has biased composition (basic and acidic residues). Residues 93-137 (DQKMQRRLAQNREAARKSRMRKKAYIQQLESSRSKLMHLEQELQR) form the bZIP domain. Residues 95 to 115 (KMQRRLAQNREAARKSRMRKK) are basic motif. The segment at 121-135 (LESSRSKLMHLEQEL) is leucine-zipper. The region spanning 162 to 382 (TLAFDLEYAR…RALSSLWLAR (221 aa)) is the DOG1 domain.

This sequence belongs to the bZIP family. Interacts with NPR1/NH1, NPR2/NH2 and NPR3/NH3.

It is found in the nucleus. Its function is as follows. Transcriptional regulator involved in defense response. This chain is Transcription factor TGAL3, found in Oryza sativa subsp. japonica (Rice).